Consider the following 777-residue polypeptide: ATPase ARSA1 (777 aa).

ATP is bound at residue 110–117; it reads KGGVGKTS. The active site involves Asp-139. ATP contacts are provided by residues Asn-372 and 454–461; that span reads KGGVGKTS. Asp-483 is a catalytic residue. Asn-712 contacts ATP.

The protein belongs to the arsA ATPase family. Monomer. Interacts with TOC34.

It is found in the cytoplasm. The protein localises to the cytosol. Functionally, ATPase required for the post-translational delivery of tail-anchored (TA) proteins to the chloroplast. Required for the accumulation of TOC34, an essential component of the outer chloroplast membrane translocon (TOC) complex. Recognizes and selectively binds the transmembrane domain of TA proteins in the cytosol. This complex then targets to chloroplast, where the tail-anchored protein is released for insertion. This process is regulated by ATP binding and hydrolysis. The polypeptide is ATPase ARSA1 (Chlamydomonas reinhardtii (Chlamydomonas smithii)).